Here is a 146-residue protein sequence, read N- to C-terminus: VHLTGEEKSAVTALWGKVNVDEVGGEALGRLLVVYPWTQRFFDSFGDLSSADAIMGNPKVKAHGKKVLNSFSDGLKNLDNLKGTFAKLSELHCDKLHVDPENFKLLGNVLVCVLAHHFGKEFTPQVQAAYQKVVAGVANALAHKYH.

Val-1 is modified (N-acetylvaline). In terms of domain architecture, Globin spans 2-146 (HLTGEEKSAV…VANALAHKYH (145 aa)). At Thr-12 the chain carries Phosphothreonine. Position 44 is a phosphoserine (Ser-44). At Lys-59 the chain carries N6-acetyllysine. Residue His-63 participates in heme b binding. N6-acetyllysine is present on Lys-82. His-92 lines the heme b pocket. Position 93 is an S-nitrosocysteine (Cys-93). Lys-144 carries the post-translational modification N6-acetyllysine.

This sequence belongs to the globin family. As to quaternary structure, heterotetramer of two alpha chains and two beta chains. In terms of tissue distribution, red blood cells.

In terms of biological role, involved in oxygen transport from the lung to the various peripheral tissues. The chain is Hemoglobin subunit beta (HBB) from Phoca vitulina (Harbor seal).